Reading from the N-terminus, the 325-residue chain is tRNA N6-adenosine threonylcarbamoyltransferase (325 aa).

Fe cation contacts are provided by histidine 107 and histidine 111. Residues leucine 129–glycine 133, aspartate 162, glycine 175, and asparagine 265 contribute to the substrate site. A Fe cation-binding site is contributed by aspartate 293.

It belongs to the KAE1 / TsaD family. Requires Fe(2+) as cofactor.

The protein localises to the cytoplasm. The enzyme catalyses L-threonylcarbamoyladenylate + adenosine(37) in tRNA = N(6)-L-threonylcarbamoyladenosine(37) in tRNA + AMP + H(+). In terms of biological role, required for the formation of a threonylcarbamoyl group on adenosine at position 37 (t(6)A37) in tRNAs that read codons beginning with adenine. Is involved in the transfer of the threonylcarbamoyl moiety of threonylcarbamoyl-AMP (TC-AMP) to the N6 group of A37, together with TsaE and TsaB. TsaD likely plays a direct catalytic role in this reaction. The protein is tRNA N6-adenosine threonylcarbamoyltransferase of Sulfurimonas denitrificans (strain ATCC 33889 / DSM 1251) (Thiomicrospira denitrificans (strain ATCC 33889 / DSM 1251)).